Reading from the N-terminus, the 264-residue chain is 5'-nucleotidase SurE (264 aa).

Residues D8, D9, S39, and N95 each coordinate a divalent metal cation.

It belongs to the SurE nucleotidase family. The cofactor is a divalent metal cation.

The protein resides in the cytoplasm. The catalysed reaction is a ribonucleoside 5'-phosphate + H2O = a ribonucleoside + phosphate. In terms of biological role, nucleotidase that shows phosphatase activity on nucleoside 5'-monophosphates. In Syntrophomonas wolfei subsp. wolfei (strain DSM 2245B / Goettingen), this protein is 5'-nucleotidase SurE.